A 117-amino-acid chain; its full sequence is Immunoglobulin lambda variable 7-43 (117 aa).

A signal peptide spans Met-1 to Ser-19. Residues Gln-20–Ser-44 form a framework-1 region. An Ig-like domain is found at Gln-20–Gln-117. An intrachain disulfide couples Cys-41 to Cys-109. Positions Thr-45–Tyr-53 are complementarity-determining-1. Positions Pro-54–Tyr-70 are framework-2. The segment at Ser-71–Ser-73 is complementarity-determining-2. Residues Asn-74–Cys-109 form a framework-3 region. The segment at Leu-110 to Gln-117 is complementarity-determining-3.

As to quaternary structure, immunoglobulins are composed of two identical heavy chains and two identical light chains; disulfide-linked.

It localises to the secreted. Its subcellular location is the cell membrane. In terms of biological role, v region of the variable domain of immunoglobulin light chains that participates in the antigen recognition. Immunoglobulins, also known as antibodies, are membrane-bound or secreted glycoproteins produced by B lymphocytes. In the recognition phase of humoral immunity, the membrane-bound immunoglobulins serve as receptors which, upon binding of a specific antigen, trigger the clonal expansion and differentiation of B lymphocytes into immunoglobulins-secreting plasma cells. Secreted immunoglobulins mediate the effector phase of humoral immunity, which results in the elimination of bound antigens. The antigen binding site is formed by the variable domain of one heavy chain, together with that of its associated light chain. Thus, each immunoglobulin has two antigen binding sites with remarkable affinity for a particular antigen. The variable domains are assembled by a process called V-(D)-J rearrangement and can then be subjected to somatic hypermutations which, after exposure to antigen and selection, allow affinity maturation for a particular antigen. The sequence is that of Immunoglobulin lambda variable 7-43 from Homo sapiens (Human).